The following is a 228-amino-acid chain: Rab-like protein 2A (228 aa).

GTP contacts are provided by residues 28–35 (GDSAVGKS), 76–80 (DTAGQ), and 133–136 (NKID). Positions 200-228 (LEQEEEDVPDQEQSSSIETPSEEVASPHS) are disordered.

This sequence belongs to the small GTPase superfamily. Rab family. In terms of assembly, interacts with IFT27, IFT81, IFT172, ATP6V1E1, HK1, LDHC, MAPRE1 and HSPA2. As to expression, expressed in the testis.

In terms of biological role, plays an essential role in male fertility, sperm intra-flagellar transport, and tail assembly. Binds, in a GTP-regulated manner, to a specific set of effector proteins including key proteins involved in cilia development and function and delivers them into the growing sperm tail. This chain is Rab-like protein 2A (RABL2A), found in Homo sapiens (Human).